The sequence spans 339 residues: Endo-beta-N-acetylglucosaminidase F1 (339 aa).

A signal peptide (or 51, or 52) is located at residues Met1–Ala50. Residues Ile60–Asp326 enclose the GH18 domain. Glu182 functions as the Proton donor in the catalytic mechanism. Residue Trp339 is a propeptide, removed in mature form.

Belongs to the glycosyl hydrolase 18 family. As to quaternary structure, monomer.

The protein localises to the secreted. The enzyme catalyses an N(4)-(oligosaccharide-(1-&gt;3)-[oligosaccharide-(1-&gt;6)]-beta-D-Man-(1-&gt;4)-beta-D-GlcNAc-(1-&gt;4)-alpha-D-GlcNAc)-L-asparaginyl-[protein] + H2O = an oligosaccharide-(1-&gt;3)-[oligosaccharide-(1-&gt;6)]-beta-D-Man-(1-&gt;4)-D-GlcNAc + N(4)-(N-acetyl-beta-D-glucosaminyl)-L-asparaginyl-[protein]. Its function is as follows. Endohydrolysis of the di-N-acetylchitobiosyl unit in high-mannose glycopeptides and glycoproteins. Does not hydrolyze complex bi- or triantennary glycans. The presence of a core-bound fucose impedes endo F1 hydrolysis. This is Endo-beta-N-acetylglucosaminidase F1 (endOF1) from Elizabethkingia meningoseptica (Chryseobacterium meningosepticum).